A 325-amino-acid polypeptide reads, in one-letter code: Elongation factor P--(R)-beta-lysine ligase (325 aa).

Residue 76-78 (SPE) participates in substrate binding. ATP-binding positions include 100-102 (RNE) and Asn109. Residue Tyr118 participates in substrate binding. Residue 244–245 (EL) participates in ATP binding. Position 251 (Glu251) interacts with substrate. An ATP-binding site is contributed by Gly300.

The protein belongs to the class-II aminoacyl-tRNA synthetase family. EpmA subfamily. Homodimer.

It carries out the reaction D-beta-lysine + L-lysyl-[protein] + ATP = N(6)-((3R)-3,6-diaminohexanoyl)-L-lysyl-[protein] + AMP + diphosphate + H(+). Functionally, with EpmB is involved in the beta-lysylation step of the post-translational modification of translation elongation factor P (EF-P) on 'Lys-34'. Catalyzes the ATP-dependent activation of (R)-beta-lysine produced by EpmB, forming a lysyl-adenylate, from which the beta-lysyl moiety is then transferred to the epsilon-amino group of EF-P 'Lys-34'. The sequence is that of Elongation factor P--(R)-beta-lysine ligase from Salmonella dublin (strain CT_02021853).